The primary structure comprises 274 residues: uncharacterized protein (274 aa).

Basic and acidic residues predominate over residues 1–15 (MEESKTKRKEDRIDL). The segment at 1–40 (MEESKTKRKEDRIDLKNTPPQKKSKRDSTNDETARTSLRS) is disordered. A G-patch domain is found at 41-87 (IMPRGYKMMENMGYKEGETLGSNESALKEPIKVEINTKRRGIRAEKP).

It localises to the cytoplasm. The protein resides in the nucleus. This is an uncharacterized protein from Saccharomyces cerevisiae (strain ATCC 204508 / S288c) (Baker's yeast).